A 281-amino-acid chain; its full sequence is Phosphonates import ATP-binding protein PhnC (281 aa).

The ABC transporter domain maps to 5 to 253 (IEVCGLTKSF…MLRDLYGTEA (249 aa)). 38 to 45 (GASGSGKS) contacts ATP.

The protein belongs to the ABC transporter superfamily. Phosphonates importer (TC 3.A.1.9.1) family. In terms of assembly, the complex is composed of two ATP-binding proteins (PhnC), two transmembrane proteins (PhnE) and a solute-binding protein (PhnD).

Its subcellular location is the cell inner membrane. The catalysed reaction is phosphonate(out) + ATP + H2O = phosphonate(in) + ADP + phosphate + H(+). Part of the ABC transporter complex PhnCDE involved in phosphonates import. Responsible for energy coupling to the transport system. In Cupriavidus pinatubonensis (strain JMP 134 / LMG 1197) (Cupriavidus necator (strain JMP 134)), this protein is Phosphonates import ATP-binding protein PhnC.